The primary structure comprises 217 residues: Uracil-DNA glycosylase (217 aa).

D62 (proton acceptor) is an active-site residue.

This sequence belongs to the uracil-DNA glycosylase (UDG) superfamily. UNG family.

The protein resides in the cytoplasm. The catalysed reaction is Hydrolyzes single-stranded DNA or mismatched double-stranded DNA and polynucleotides, releasing free uracil.. Its function is as follows. Excises uracil residues from the DNA which can arise as a result of misincorporation of dUMP residues by DNA polymerase or due to deamination of cytosine. This is Uracil-DNA glycosylase from Streptococcus pyogenes serotype M1.